The primary structure comprises 213 residues: Thymidylate kinase (213 aa).

10-17 (GLEGAGKT) is a binding site for ATP.

Belongs to the thymidylate kinase family.

It catalyses the reaction dTMP + ATP = dTDP + ADP. Its function is as follows. Phosphorylation of dTMP to form dTDP in both de novo and salvage pathways of dTTP synthesis. The chain is Thymidylate kinase from Shigella boydii serotype 18 (strain CDC 3083-94 / BS512).